We begin with the raw amino-acid sequence, 310 residues long: Protoheme IX farnesyltransferase 2 (310 aa).

The next 9 membrane-spanning stretches (helical) occupy residues 25–45, 49–69, 87–107, 120–139, 145–165, 176–196, 220–240, 242–262, and 277–297; these read PGIIFGNLISVAGGFLLAAKG, LVLMLASLVGLSLVVASGCAI, RVTVTGEIAVGNVLAFGLALG, ALALLFAVIGYIVYVGVYSL, SVYGTLVGSFSGAVPPVVGYC, AILLLMFSLWQMPHSYAIAIF, LHIVLYIAVFALVSALLPLAG, TGIAFMAVTCATSLWWLAMAL, and QVFGFSIITITALSVTMALDF.

It belongs to the UbiA prenyltransferase family. Protoheme IX farnesyltransferase subfamily.

The protein resides in the cell inner membrane. The enzyme catalyses heme b + (2E,6E)-farnesyl diphosphate + H2O = Fe(II)-heme o + diphosphate. The protein operates within porphyrin-containing compound metabolism; heme O biosynthesis; heme O from protoheme: step 1/1. In terms of biological role, converts heme B (protoheme IX) to heme O by substitution of the vinyl group on carbon 2 of heme B porphyrin ring with a hydroxyethyl farnesyl side group. The polypeptide is Protoheme IX farnesyltransferase 2 (Shewanella baltica (strain OS185)).